The chain runs to 653 residues: Zinc finger protein 59 (653 aa).

In terms of domain architecture, KRAB spans 14–86 (VTFRDVAVDF…VNEETGRPSP (73 aa)). 16 consecutive C2H2-type zinc fingers follow at residues 172–194 (YECKECGKCFGCRSTLTQHQSVH), 200–222 (YECKECGKAFRLPQQLTRHQKCH), 256–278 (FACRECGKSFNRVSSLVEHGLIH), 284–306 (YECNECGKAFKRHRSFVRHQKIH), 312–334 (FQCKDCGKGFIVLAHLTRHQSSH), 340–362 (FECEECGKKFRTARHLVKHQRIH), 368–390 (FECNVCGSAFRLQLYLSEHQKTH), 396–418 (LECNVCGKAFRLQVYLSEHLKTH), 424–446 (FKCKLCGSAFPNKYQLNKHLTVH), 452–474 (YQCKECGKCFRQRSKLTEHESIH), 480–502 (FQCEECGKFFRLNTLLIHHQKSH), 508–530 (FECKECGKAFLLPSQLNSHKIVH), 536–558 (FECKVCGKSFKRESNLIQHGAVH), 564–586 (YECSECGKGFIHRSSLFHHRKIH), 592–614 (FKCQECGKAFVVLAYLIQHQSIH), and 620–642 (FECELCGSAFRCRSQLNKHLRIH).

The protein belongs to the krueppel C2H2-type zinc-finger protein family. In terms of tissue distribution, expressed predominantly in the testis (at protein level).

The protein resides in the nucleus. Functionally, may have a role during differentiation processes. The sequence is that of Zinc finger protein 59 (Zfp59) from Mus musculus (Mouse).